Reading from the N-terminus, the 219-residue chain is Large ribosomal subunit protein uL3 (219 aa).

Belongs to the universal ribosomal protein uL3 family. Part of the 50S ribosomal subunit. Forms a cluster with proteins L14 and L19.

Its function is as follows. One of the primary rRNA binding proteins, it binds directly near the 3'-end of the 23S rRNA, where it nucleates assembly of the 50S subunit. The sequence is that of Large ribosomal subunit protein uL3 from Salinispora arenicola (strain CNS-205).